An 86-amino-acid polypeptide reads, in one-letter code: uncharacterized protein (86 aa).

The chain crosses the membrane as a helical span at residues 4-24 (LFFTLIAFVAIILLMSIGFII).

The protein localises to the membrane. This is an uncharacterized protein from Haemophilus influenzae (strain ATCC 51907 / DSM 11121 / KW20 / Rd).